We begin with the raw amino-acid sequence, 426 residues long: Histidine--tRNA ligase (426 aa).

This sequence belongs to the class-II aminoacyl-tRNA synthetase family. As to quaternary structure, homodimer.

It is found in the cytoplasm. The enzyme catalyses tRNA(His) + L-histidine + ATP = L-histidyl-tRNA(His) + AMP + diphosphate + H(+). The sequence is that of Histidine--tRNA ligase from Shewanella baltica (strain OS195).